The primary structure comprises 147 residues: Small ribosomal subunit protein uS12 (147 aa).

The protein belongs to the universal ribosomal protein uS12 family. Part of the 30S ribosomal subunit.

With S4 and S5 plays an important role in translational accuracy. Located at the interface of the 30S and 50S subunits. This Methanococcus maripaludis (strain C7 / ATCC BAA-1331) protein is Small ribosomal subunit protein uS12.